The primary structure comprises 255 residues: Thiazole synthase (255 aa).

The active-site Schiff-base intermediate with DXP is K96. Residues G157, 183 to 184, and 205 to 206 each bind 1-deoxy-D-xylulose 5-phosphate; these read AG and NT.

This sequence belongs to the ThiG family. In terms of assembly, homotetramer. Forms heterodimers with either ThiH or ThiS.

It is found in the cytoplasm. It carries out the reaction [ThiS sulfur-carrier protein]-C-terminal-Gly-aminoethanethioate + 2-iminoacetate + 1-deoxy-D-xylulose 5-phosphate = [ThiS sulfur-carrier protein]-C-terminal Gly-Gly + 2-[(2R,5Z)-2-carboxy-4-methylthiazol-5(2H)-ylidene]ethyl phosphate + 2 H2O + H(+). Its pathway is cofactor biosynthesis; thiamine diphosphate biosynthesis. Functionally, catalyzes the rearrangement of 1-deoxy-D-xylulose 5-phosphate (DXP) to produce the thiazole phosphate moiety of thiamine. Sulfur is provided by the thiocarboxylate moiety of the carrier protein ThiS. In vitro, sulfur can be provided by H(2)S. In Geobacillus thermodenitrificans (strain NG80-2), this protein is Thiazole synthase.